We begin with the raw amino-acid sequence, 171 residues long: Nicotinamide-nucleotide adenylyltransferase (171 aa).

It belongs to the archaeal NMN adenylyltransferase family.

The protein resides in the cytoplasm. The catalysed reaction is beta-nicotinamide D-ribonucleotide + ATP + H(+) = diphosphate + NAD(+). It participates in cofactor biosynthesis; NAD(+) biosynthesis; NAD(+) from nicotinamide D-ribonucleotide: step 1/1. The chain is Nicotinamide-nucleotide adenylyltransferase from Methanococcus maripaludis (strain C6 / ATCC BAA-1332).